Reading from the N-terminus, the 486-residue chain is L-carnitine:corrinoid methyltransferase (486 aa).

This sequence belongs to the trimethylamine methyltransferase family. As to quaternary structure, the L-carnitine:THF methyl transfer system is composed of two methyltransferases, MtcB and MtqA, and the corrinoid protein MtqC.

The catalysed reaction is Co(I)-[quaternary-amine-specific corrinoid protein] + (R)-carnitine + H(+) = (3R)-4-(dimethylamino)-3-hydroxybutanoate + methyl-Co(III)-[quaternary-amine-specific corrinoid protein]. Involved in the degradation of the quaternary amine L-carnitine. Component of a corrinoid-dependent methyltransferase system that transfers a methyl group from L-carnitine to tetrahydrofolate (THF), forming methyl-THF, a key intermediate in the Wood-Ljungdahl acetogenesis pathway. MtcB catalyzes the methylation of the corrinoid protein MtqC, using L-carnitine as the methyl donor. L-carnitine demethylation generates the unusual biological product norcarnitine, which is likely degraded by other members of the gut microbiota. In vitro, can methylate free cob(I)alamin. This chain is L-carnitine:corrinoid methyltransferase, found in Eubacterium limosum.